An 823-amino-acid chain; its full sequence is Putative ankyrin repeat domain-containing protein 20A2 (823 aa).

ANK repeat units follow at residues glutamine 66 to valine 95, glutamate 99 to leucine 128, tyrosine 132 to alanine 161, aspartate 165 to alanine 194, and leucine 198 to alanine 227. Disordered regions lie at residues valine 301–aspartate 343 and valine 355–asparagine 402. The segment covering glutamine 372–glutamine 384 has biased composition (basic and acidic residues). Coiled coils occupy residues lysine 431–glutamate 480, glutamate 565–threonine 724, and leucine 776–glutamate 805.

The chain is Putative ankyrin repeat domain-containing protein 20A2 from Homo sapiens (Human).